Here is a 94-residue protein sequence, read N- to C-terminus: Large ribosomal subunit protein bL28 (94 aa).

Belongs to the bacterial ribosomal protein bL28 family.

This is Large ribosomal subunit protein bL28 from Novosphingobium aromaticivorans (strain ATCC 700278 / DSM 12444 / CCUG 56034 / CIP 105152 / NBRC 16084 / F199).